The sequence spans 887 residues: Leucine--tRNA ligase (887 aa).

The short motif at 48-58 is the 'HIGH' region element; it reads PYPSGKLHMGH. Residues 644-648 carry the 'KMSKS' region motif; the sequence is TMSKS. Lys-647 lines the ATP pocket.

Belongs to the class-I aminoacyl-tRNA synthetase family.

It localises to the cytoplasm. The catalysed reaction is tRNA(Leu) + L-leucine + ATP = L-leucyl-tRNA(Leu) + AMP + diphosphate. This chain is Leucine--tRNA ligase, found in Leptothrix cholodnii (strain ATCC 51168 / LMG 8142 / SP-6) (Leptothrix discophora (strain SP-6)).